Reading from the N-terminus, the 444-residue chain is C4-dicarboxylate transport protein (444 aa).

9 helical membrane passes run 18–40 (FYSH…GHFY), 53–75 (AFIK…TGIA), 90–112 (AMLY…ANVV), 142–159 (IVGF…GAFA), 163–180 (ILQV…LAMV), 201–222 (LVAI…FTIG), 232–254 (LAML…LGAV), 327–349 (LFIA…LLVA), and 364–386 (FITL…ALIL).

Belongs to the dicarboxylate/amino acid:cation symporter (DAACS) (TC 2.A.23) family.

It localises to the cell inner membrane. In terms of biological role, responsible for the transport of dicarboxylates such as succinate, fumarate, and malate from the periplasm across the inner membrane. This transport system plays an important role in the energy supply of rhizobium-legume symbionts. The polypeptide is C4-dicarboxylate transport protein (dctA) (Rhizobium leguminosarum).